A 65-amino-acid polypeptide reads, in one-letter code: Beta-mammal toxin Tma1 (65 aa).

An LCN-type CS-alpha/beta domain is found at 2–64; sequence KEGYLVGNDG…TWNSAKNRCG (63 aa). 4 disulfide bridges follow: Cys12–Cys63, Cys16–Cys38, Cys24–Cys44, and Cys28–Cys46.

Belongs to the long (4 C-C) scorpion toxin superfamily. Sodium channel inhibitor family. Expressed by the venom gland.

It localises to the secreted. Functionally, beta toxins bind voltage-independently at site-4 of sodium channels (Nav) and shift the voltage of activation toward more negative potentials thereby affecting sodium channel activation and promoting spontaneous and repetitive firing. This toxin acts on human Nav1.4/SCN4A and Nav1.6/SCN8A voltage-gated sodium channels. This is Beta-mammal toxin Tma1 from Tityus macrochirus (Scorpion).